The following is a 300-amino-acid chain: MTAFGVEPYGQPKYLEIAGKRMAYIDEGKGDAIVFQHGNPTSSYLWRNIMPHLEGLGRLVACDLIGMGASDKLSPSGPDRYSYGEQRDFLFALWDALDLGDHVVLVLHDWGSALGFDWANQHRDRVQGIAFMEAIVTPMTWADWPPAVRGVFQGFRSPQGEPMALEHNIFVERVLPGAILRQLSDEEMNHYRRPFVNGGEDRRPTLSWPRNLPIDGEPAEVVALVNEYRSWLEETDMPKLFINAEPGAIITGRIRDYVRSWPNQTEITVPGVHFVQEDSPEEIGAAIAQFVRQLRSAAGV.

Residues 32-155 (AIVFQHGNPT…PAVRGVFQGF (124 aa)) form the AB hydrolase-1 domain. The active-site Nucleophile is the Asp-109. The active-site Proton donor is the Glu-133. The active-site Proton acceptor is the His-273.

The protein belongs to the haloalkane dehalogenase family. Type 2 subfamily. In terms of assembly, monomer.

It catalyses the reaction 1-haloalkane + H2O = a halide anion + a primary alcohol + H(+). Catalyzes hydrolytic cleavage of carbon-halogen bonds in halogenated aliphatic compounds, leading to the formation of the corresponding primary alcohols, halide ions and protons. This Mycobacterium bovis (strain BCG / Pasteur 1173P2) protein is Haloalkane dehalogenase.